The following is a 1043-amino-acid chain: Protein translocase subunit SecA (1043 aa).

Residues Q143, 161-165 (GEGKT), and D665 contribute to the ATP site. The span at 980 to 1005 (ATAAPAAETTTTAKAADAARQQPPAA) shows a compositional bias: low complexity. Residues 980-1043 (ATAAPAAETT…KYKHCHGRNA (64 aa)) form a disordered region. A compositionally biased stretch (basic and acidic residues) spans 1008–1022 (EEQKRQPVHVEKTPG). Positions 1027, 1029, 1038, and 1039 each coordinate Zn(2+). Residues 1033 to 1043 (KKYKHCHGRNA) are compositionally biased toward basic residues.

The protein belongs to the SecA family. As to quaternary structure, monomer and homodimer. Part of the essential Sec protein translocation apparatus which comprises SecA, SecYEG and auxiliary proteins SecDF. Other proteins may also be involved. Requires Zn(2+) as cofactor.

Its subcellular location is the cell inner membrane. It is found in the cytoplasm. The catalysed reaction is ATP + H2O + cellular proteinSide 1 = ADP + phosphate + cellular proteinSide 2.. Functionally, part of the Sec protein translocase complex. Interacts with the SecYEG preprotein conducting channel. Has a central role in coupling the hydrolysis of ATP to the transfer of proteins into and across the cell membrane, serving as an ATP-driven molecular motor driving the stepwise translocation of polypeptide chains across the membrane. In Chloroherpeton thalassium (strain ATCC 35110 / GB-78), this protein is Protein translocase subunit SecA.